A 316-amino-acid chain; its full sequence is Glycine--tRNA ligase alpha subunit (316 aa).

This sequence belongs to the class-II aminoacyl-tRNA synthetase family. In terms of assembly, tetramer of two alpha and two beta subunits.

It localises to the cytoplasm. It carries out the reaction tRNA(Gly) + glycine + ATP = glycyl-tRNA(Gly) + AMP + diphosphate. In Paracoccus denitrificans (strain Pd 1222), this protein is Glycine--tRNA ligase alpha subunit.